The following is a 117-amino-acid chain: Fluoride-specific ion channel FluC 2 (117 aa).

The next 2 membrane-spanning stretches (helical) occupy residues 1 to 21 and 46 to 66; these read MISIILVMIGGGFGAIARSAI and FLIGLTIGLSISISWFPAFFV. Na(+)-binding residues include Gly-71 and Thr-74. Residues 95-115 traverse the membrane as a helical segment; sequence LFLNYSLLQFIIGFIACYIGY.

This sequence belongs to the fluoride channel Fluc/FEX (TC 1.A.43) family.

Its subcellular location is the cell membrane. It carries out the reaction fluoride(in) = fluoride(out). Na(+) is not transported, but it plays an essential structural role and its presence is essential for fluoride channel function. Functionally, fluoride-specific ion channel. Important for reducing fluoride concentration in the cell, thus reducing its toxicity. The protein is Fluoride-specific ion channel FluC 2 of Staphylococcus aureus (strain NCTC 8325 / PS 47).